A 376-amino-acid chain; its full sequence is Natterin-2 (376 aa).

The N-terminal stretch at 1–18 is a signal peptide; sequence MNLSVLLVTLLLLSWTSA. Residues 19–27 constitute a propeptide that is removed on maturation; it reads EKDLKVRVA.

Belongs to the natterin family. In terms of processing, contains 4 disulfide bonds. In terms of tissue distribution, expressed by the venom gland.

The protein resides in the secreted. With respect to regulation, inhibited by tissue-kallikrein inhibitor TKI and trasylol. Plasma kallikrein inhibitor PKSI527 and classical inhibitors of serine-, metallo-, thiol- or aspartate-peptidases evokes a minor inhibition of the peptide digestion. In terms of biological role, shows nociceptive, edema-inducing and kininogenase activity with release of kallidin from low molecular weight kininogen. The cleavage occurs at Met-Lys bonds. This Thalassophryne nattereri (Copper Joe toadfish) protein is Natterin-2.